A 454-amino-acid chain; its full sequence is Signal recognition particle protein (454 aa).

Residues 102-109 (GLQGTGKT), 184-188 (DTAGR), and 242-245 (TKMD) each bind GTP.

It belongs to the GTP-binding SRP family. SRP54 subfamily. As to quaternary structure, part of the signal recognition particle protein translocation system, which is composed of SRP and FtsY.

The protein localises to the cytoplasm. The enzyme catalyses GTP + H2O = GDP + phosphate + H(+). Functionally, involved in targeting and insertion of nascent membrane proteins into the cytoplasmic membrane. Binds to the hydrophobic signal sequence of the ribosome-nascent chain (RNC) as it emerges from the ribosomes. The SRP-RNC complex is then targeted to the cytoplasmic membrane where it interacts with the SRP receptor FtsY. In Aquifex aeolicus (strain VF5), this protein is Signal recognition particle protein.